We begin with the raw amino-acid sequence, 59 residues long: Large ribosomal subunit protein bL32 (59 aa).

The tract at residues 1 to 59 (MAVQQNKKSPSKRGMHRSHDHLSVAPLAVEPTTGETHLRHHVSPNGYYRGRKVIKTKND) is disordered. 2 stretches are compositionally biased toward basic residues: residues 9–19 (SPSKRGMHRSH) and 49–59 (RGRKVIKTKND).

The protein belongs to the bacterial ribosomal protein bL32 family.

This Cupriavidus metallidurans (strain ATCC 43123 / DSM 2839 / NBRC 102507 / CH34) (Ralstonia metallidurans) protein is Large ribosomal subunit protein bL32.